The primary structure comprises 510 residues: MNKETVVVLDFGGQYNQLIARRVRELSVYSEMLPYDTSYEEIVAKKPQAIILTGSPASVHGGEAPGCDPRVFSLGIPVLGICYGMQLMAEQMGGKVQPSSLREYGRAVLQLTGKDEIFKGLPDEMQVWMSHGDTIISLPEGFRITASTANCPVAAISCPQRRLYGVQFHPEVRHSTYGMDIIRNFLFEICGLRGDWDLSDFISEAIEEIKNKVGKKRVLCALSGGVDSSVAATLVHQAVGEQLVCVFVDNGLLRKGEASQVIDTFAKEMKMNLVFVDARERFLAKLAGITEPERKRKIIGEEFIRIFEEEKAKLGEIDYLVQGTIYPDIVESGTSTAQTIKSHHNVGGLPEDMDFQLIEPLRLLFKDEVRLVGEKLGIPAEILWRQPFPGPGLGVRVLEEVSFEKLEILREADAIVRDEIKKAGLEREIWQAFAVLPPVRSVGVMGDARTYAYPIIIRAVISEDAMTAEVARLPWELLDIMARRIVNEVAGVNRVAYDITSKPPGTIEWE.

One can recognise a Glutamine amidotransferase type-1 domain in the interval 5–195; it reads TVVVLDFGGQ…LFEICGLRGD (191 aa). Cys-82 (nucleophile) is an active-site residue. Catalysis depends on residues His-169 and Glu-171. The 190-residue stretch at 196–385 folds into the GMPS ATP-PPase domain; sequence WDLSDFISEA…LGIPAEILWR (190 aa). 223–229 contacts ATP; that stretch reads SGGVDSS.

Homodimer.

It catalyses the reaction XMP + L-glutamine + ATP + H2O = GMP + L-glutamate + AMP + diphosphate + 2 H(+). It participates in purine metabolism; GMP biosynthesis; GMP from XMP (L-Gln route): step 1/1. Its function is as follows. Catalyzes the synthesis of GMP from XMP. The chain is GMP synthase [glutamine-hydrolyzing] from Syntrophomonas wolfei subsp. wolfei (strain DSM 2245B / Goettingen).